The sequence spans 318 residues: Methionyl-tRNA formyltransferase (318 aa).

112 to 115 (SILP) provides a ligand contact to (6S)-5,6,7,8-tetrahydrofolate.

This sequence belongs to the Fmt family.

It carries out the reaction L-methionyl-tRNA(fMet) + (6R)-10-formyltetrahydrofolate = N-formyl-L-methionyl-tRNA(fMet) + (6S)-5,6,7,8-tetrahydrofolate + H(+). Its function is as follows. Attaches a formyl group to the free amino group of methionyl-tRNA(fMet). The formyl group appears to play a dual role in the initiator identity of N-formylmethionyl-tRNA by promoting its recognition by IF2 and preventing the misappropriation of this tRNA by the elongation apparatus. The protein is Methionyl-tRNA formyltransferase of Shewanella baltica (strain OS195).